Here is a 747-residue protein sequence, read N- to C-terminus: Endoglucanase D (747 aa).

The first 39 residues, 1–39 (MHSASRTRARTRVRTAVSGLLAATVLAAPLTLVAAPAQA), serve as a signal peptide directing secretion. The Proton donor role is filled by Glu-208. The active-site Nucleophile is Glu-349. The interval 456 to 475 (APTGLRAGTPTASTVPLTWS) is disordered. Fibronectin type-III domains lie at 456 to 543 (APTG…TAAG) and 552 to 639 (VPTG…TAPD). Over residues 465 to 475 (PTASTVPLTWS) the composition is skewed to polar residues. Residues 638-747 (PDPTTGSCAV…TVGGATCTTR (110 aa)) enclose the CBM2 domain.

This sequence belongs to the glycosyl hydrolase 5 (cellulase A) family.

It carries out the reaction Endohydrolysis of (1-&gt;4)-beta-D-glucosidic linkages in cellulose, lichenin and cereal beta-D-glucans.. It functions in the pathway glycan metabolism; cellulose degradation. The sequence is that of Endoglucanase D (cenD) from Cellulomonas fimi.